Reading from the N-terminus, the 285-residue chain is Nudix hydrolase 15, mitochondrial (285 aa).

Residues 1–23 constitute a mitochondrion transit peptide; it reads MFLLYRRLPSFARTTTTTLLCKS. N-acetylmethionine is present on M24. Disordered regions lie at residues 51-72 and 129-152; these read RQYK…TDQE and THSG…GMTA. The region spanning 99–255 is the Nudix hydrolase domain; sequence PKRAAVLICL…DKDYMIWGLT (157 aa). Positions 140-161 match the Nudix box motif; sequence KAEEDDKDDGMTATREAEEEIG. Residues E155 and E159 each contribute to the Mg(2+) site.

Belongs to the Nudix hydrolase family. It depends on Mg(2+) as a cofactor. Mn(2+) serves as cofactor. In terms of tissue distribution, expressed in roots, leaves, stems and inflorescences.

Its subcellular location is the mitochondrion. Coenzyme A diphosphatase which mediates the cleavage of oxidized CoA. Can use malonyl-CoA, hexanoyl-CoA, lauroyl-CoA, myristoyl-CoA and palmitoyl-CoA as substrates, but not isobutyryl-CoA or propionyl-CoA. This is Nudix hydrolase 15, mitochondrial (NUDT15) from Arabidopsis thaliana (Mouse-ear cress).